We begin with the raw amino-acid sequence, 360 residues long: MPLVAHTRLPTFERLKQEGQTVLSEDYAFQQDIRELHIGFLNMMPDAALAATERQFLRLVNESNLIAQFHIHPFTLGTLPRGDKAQAHIAQYYDKFEDLQEQGLDALIITGANPAAPHLEDEPFWDGLCEVVAWAQENVTSTLCSCLASHALVQHLWGIRRRPLGFKRWGVYSHAVTMPEHPLVNDLNTRFDVPHSRFNQIDREPLEAVGVQVLVESTEAGVHMAVSPDLFRMVFMQGHPEYDTVSLLKEYRREVTRWFDGTRADYPPFPQNYLRPKAKAILNEYRLEQEKAKRLGKPLPDFPEKLLLPMLHNTWCDTAKVFYSNWIGKVYQLTNNDRRKPFMEGVNPDDPLGLRQQLGI.

Cys-146 serves as the catalytic Acyl-thioester intermediate. Substrate is bound by residues Lys-167 and Ser-196. His-239 functions as the Proton acceptor in the catalytic mechanism. Glu-241 is an active-site residue. Residue Arg-253 participates in substrate binding.

Belongs to the MetA family.

The protein localises to the cytoplasm. It carries out the reaction L-homoserine + succinyl-CoA = O-succinyl-L-homoserine + CoA. Its pathway is amino-acid biosynthesis; L-methionine biosynthesis via de novo pathway; O-succinyl-L-homoserine from L-homoserine: step 1/1. In terms of biological role, transfers a succinyl group from succinyl-CoA to L-homoserine, forming succinyl-L-homoserine. In vitro, can also use glutaryl-CoA as acyl donor. The protein is Homoserine O-succinyltransferase of Thiothrix nivea (strain ATCC 35100 / DSM 5205 / JP2).